Here is a 167-residue protein sequence, read N- to C-terminus: MFRLSNYMLRKSQFPQGLVRAPFGIRGYAQAVQKNEKLVLSMALPYQTIYEKVPVTQVDIPAEDGEMGILKDHVPMIQCLKPGVISVTDESSNKSKYFISGGFAVQQPSNELSITVPEAYKLEDFSSSVANQLLEKHKAEMNSSDEGVAAEAAVRVSVLESLVRALK.

Residues Met-1–Tyr-28 constitute a mitochondrion transit peptide.

This sequence belongs to the ATPase epsilon chain family. In terms of assembly, F-type ATPases have 2 components, CF(1) - the catalytic core - and CF(0) - the membrane proton channel. CF(1) has five subunits: alpha(3), beta(3), gamma(1), delta(1), epsilon(1). CF(0) has three main subunits: a, b and c.

Its subcellular location is the mitochondrion. The protein resides in the mitochondrion inner membrane. Its function is as follows. Mitochondrial membrane ATP synthase (F(1)F(0) ATP synthase or Complex V) produces ATP from ADP in the presence of a proton gradient across the membrane which is generated by electron transport complexes of the respiratory chain. F-type ATPases consist of two structural domains, F(1) - containing the extramembraneous catalytic core, and F(0) - containing the membrane proton channel, linked together by a central stalk and a peripheral stalk. During catalysis, ATP turnover in the catalytic domain of F(1) is coupled via a rotary mechanism of the central stalk subunits to proton translocation. Part of the complex F(1) domain and of the central stalk which is part of the complex rotary element. Rotation of the central stalk against the surrounding alpha(3)beta(3) subunits leads to hydrolysis of ATP in three separate catalytic sites on the beta subunits. In Schizosaccharomyces pombe (strain 972 / ATCC 24843) (Fission yeast), this protein is ATP synthase subunit delta, mitochondrial (atp16).